The chain runs to 233 residues: 5'-methylthioadenosine/S-adenosylhomocysteine nucleosidase (233 aa).

Glutamate 12 functions as the Proton acceptor in the catalytic mechanism. Substrate contacts are provided by residues glycine 78, isoleucine 152, and 173–174; that span reads ME. Aspartate 197 serves as the catalytic Proton donor.

Belongs to the PNP/UDP phosphorylase family. MtnN subfamily. As to quaternary structure, homodimer.

The catalysed reaction is S-adenosyl-L-homocysteine + H2O = S-(5-deoxy-D-ribos-5-yl)-L-homocysteine + adenine. It carries out the reaction S-methyl-5'-thioadenosine + H2O = 5-(methylsulfanyl)-D-ribose + adenine. The enzyme catalyses 5'-deoxyadenosine + H2O = 5-deoxy-D-ribose + adenine. The protein operates within amino-acid biosynthesis; L-methionine biosynthesis via salvage pathway; S-methyl-5-thio-alpha-D-ribose 1-phosphate from S-methyl-5'-thioadenosine (hydrolase route): step 1/2. In terms of biological role, catalyzes the irreversible cleavage of the glycosidic bond in both 5'-methylthioadenosine (MTA) and S-adenosylhomocysteine (SAH/AdoHcy) to adenine and the corresponding thioribose, 5'-methylthioribose and S-ribosylhomocysteine, respectively. Also cleaves 5'-deoxyadenosine, a toxic by-product of radical S-adenosylmethionine (SAM) enzymes, into 5-deoxyribose and adenine. Thus, is required for in vivo function of the radical SAM enzymes biotin synthase and lipoic acid synthase, that are inhibited by 5'-deoxyadenosine accumulation. This is 5'-methylthioadenosine/S-adenosylhomocysteine nucleosidase from Yersinia pestis bv. Antiqua (strain Antiqua).